A 127-amino-acid chain; its full sequence is Small ribosomal subunit protein uS11 (127 aa).

The protein belongs to the universal ribosomal protein uS11 family. Part of the 30S ribosomal subunit. Interacts with proteins S7 and S18. Binds to IF-3.

Its function is as follows. Located on the platform of the 30S subunit, it bridges several disparate RNA helices of the 16S rRNA. Forms part of the Shine-Dalgarno cleft in the 70S ribosome. In Chlorobium chlorochromatii (strain CaD3), this protein is Small ribosomal subunit protein uS11.